The following is a 220-amino-acid chain: MVILTKEASMVRQALLANGLEPFLRGEERLGIEARKRRIAAHMKKIMTLLNLDLADDSLAKTPYRIAYMYIEEIFPGLDYANFPQITLISNKMKADEMVTVRNITLTSTCEHHFLMIDGKATVSYIPKSNVIGLSKINRIVRFFAQRPQVQERLTQQILLALQTILGTNNVAVSIYAVHYCVKARGICDSTSTTTTTSLGGIFKSSQNTRQEFLRTINQT.

Positions 110, 113, and 181 each coordinate Zn(2+).

This sequence belongs to the GTP cyclohydrolase I family. Toroid-shaped homodecamer, composed of two pentamers of five dimers.

The catalysed reaction is GTP + H2O = 7,8-dihydroneopterin 3'-triphosphate + formate + H(+). The protein operates within cofactor biosynthesis; 7,8-dihydroneopterin triphosphate biosynthesis; 7,8-dihydroneopterin triphosphate from GTP: step 1/1. This chain is GTP cyclohydrolase 1, found in Baumannia cicadellinicola subsp. Homalodisca coagulata.